We begin with the raw amino-acid sequence, 371 residues long: GDSL esterase/lipase At3g27950 (371 aa).

Positions 1–23 are cleaved as a signal peptide; sequence MAISKITLAIIVLLLGFTEKLSA. Residue Ser-39 is the Nucleophile of the active site. Asn-82, Asn-143, Asn-178, Asn-194, and Asn-315 each carry an N-linked (GlcNAc...) asparagine glycan. Catalysis depends on residues Asp-334 and His-337.

This sequence belongs to the 'GDSL' lipolytic enzyme family.

The protein resides in the secreted. The sequence is that of GDSL esterase/lipase At3g27950 from Arabidopsis thaliana (Mouse-ear cress).